A 398-amino-acid chain; its full sequence is ATP-dependent RNA helicase eIF4A (398 aa).

The Q motif signature appears at 25–53; that stretch reads DSFDSMDLKPELLRGVYAYGFERPSAIQQ. The region spanning 56–226 is the Helicase ATP-binding domain; sequence IKPIIAGHDV…TKFMRDPIRI (171 aa). ATP is bound at residue 69-76; it reads AQSGTGKT. The DEAD box signature appears at 174–177; sequence DEAD. A Helicase C-terminal domain is found at 237 to 398; that stretch reads GIKQFYIAVE…EMPMNVADLI (162 aa).

This sequence belongs to the DEAD box helicase family. eIF4A subfamily. As to quaternary structure, component of the eIF4F complex, which composition varies with external and internal environmental conditions. It is composed of at least eIF4A, eIF4E and eIF4G.

The protein resides in the cytoplasm. The catalysed reaction is ATP + H2O = ADP + phosphate + H(+). In terms of biological role, ATP-dependent RNA helicase which is a subunit of the eIF4F complex involved in cap recognition and is required for mRNA binding to ribosome. In the current model of translation initiation, eIF4A unwinds RNA secondary structures in the 5'-UTR of mRNAs which is necessary to allow efficient binding of the small ribosomal subunit, and subsequent scanning for the initiator codon. This Aspergillus niger (strain ATCC MYA-4892 / CBS 513.88 / FGSC A1513) protein is ATP-dependent RNA helicase eIF4A (tif1).